We begin with the raw amino-acid sequence, 47 residues long: Potassium channel toxin alpha-KTx 7.1 (47 aa).

Residues 1 to 12 (RGSVDYKDDDDK) form the signal peptide. Cystine bridges form between Cys-16–Cys-37, Cys-22–Cys-42, and Cys-26–Cys-44.

The protein belongs to the short scorpion toxin superfamily. Potassium channel inhibitor family. Alpha-KTx 07 subfamily. As to expression, expressed by the venom gland.

The protein resides in the secreted. Functionally, potent inhibitor of the A-type voltage-gated potassium channels. Most potent inhibitor of Kv1.2/KCNA2 channels. Reversibly block the Shaker B potassium-channels (Kv1.1 sub-family). The sequence is that of Potassium channel toxin alpha-KTx 7.1 (PTX-1) from Pandinus imperator (Emperor scorpion).